A 932-amino-acid polypeptide reads, in one-letter code: Glycine dehydrogenase (decarboxylating) (932 aa).

At lysine 685 the chain carries N6-(pyridoxal phosphate)lysine.

This sequence belongs to the GcvP family. The glycine cleavage system is composed of four proteins: P, T, L and H. It depends on pyridoxal 5'-phosphate as a cofactor.

The catalysed reaction is N(6)-[(R)-lipoyl]-L-lysyl-[glycine-cleavage complex H protein] + glycine + H(+) = N(6)-[(R)-S(8)-aminomethyldihydrolipoyl]-L-lysyl-[glycine-cleavage complex H protein] + CO2. Functionally, the glycine cleavage system catalyzes the degradation of glycine. The P protein binds the alpha-amino group of glycine through its pyridoxal phosphate cofactor; CO(2) is released and the remaining methylamine moiety is then transferred to the lipoamide cofactor of the H protein. The protein is Glycine dehydrogenase (decarboxylating) of Brucella suis biovar 1 (strain 1330).